A 448-amino-acid chain; its full sequence is Trk system potassium uptake protein TrkA homolog 2 (448 aa).

The region spanning 1–124 is the RCK N-terminal 1 domain; sequence MKAVVIGAGE…RAQVGVDIMI (124 aa). NAD(+) contacts are provided by residues 7–11, glutamate 29, 70–71, and arginine 101; these read GAGEV and TG. The RCK C-terminal 1 domain occupies 144 to 225; it reads IDAEMFAGGK…MADLENVFGN (82 aa). One can recognise an RCK N-terminal 2 domain in the interval 230–348; the sequence is RNRILLIGCG…FEMVGIDIAV (119 aa). 232 to 262 is a binding site for NAD(+); it reads RILLIGCGIVGFYLAKIIDKDENADLKVIEY. The RCK C-terminal 2 domain occupies 368 to 448; the sequence is EALATIEGEK…AVRSVEKLFK (81 aa).

Functionally, part of a potassium transport system. This is Trk system potassium uptake protein TrkA homolog 2 (trkA2) from Methanosarcina mazei (strain ATCC BAA-159 / DSM 3647 / Goe1 / Go1 / JCM 11833 / OCM 88) (Methanosarcina frisia).